Reading from the N-terminus, the 113-residue chain is UPF0145 protein MTH_544 (113 aa).

It belongs to the UPF0145 family.

This is UPF0145 protein MTH_544 from Methanothermobacter thermautotrophicus (strain ATCC 29096 / DSM 1053 / JCM 10044 / NBRC 100330 / Delta H) (Methanobacterium thermoautotrophicum).